A 374-amino-acid chain; its full sequence is Actin-related protein 2/3 complex subunit 2B (374 aa).

This sequence belongs to the ARPC2 family. In terms of assembly, component of the Arp2/3 complex composed of ARP2, ARP3, ARPC1/p41-ARC, ARPC2/p34-ARC, ARPC3/p21-ARC, ARPC4/p20-ARC and ARPC5/p16-ARC. Expressed at low levels in all tissues with a relatively highest expression in inflorescences.

It is found in the cytoplasm. Its subcellular location is the cytoskeleton. The protein localises to the cell projection. Its function is as follows. Functions as actin-binding component of the Arp2/3 complex which is involved in regulation of actin polymerization and together with an activating nucleation-promoting factor (NPF) mediates the formation of branched actin networks. Seems to contact the mother actin filament. Arp2/3 complex plays a critical role in the control of cell morphogenesis via the modulation of cell polarity development. In Arabidopsis thaliana (Mouse-ear cress), this protein is Actin-related protein 2/3 complex subunit 2B (ARPC2B).